The chain runs to 207 residues: Large ribosomal subunit protein uL4 (207 aa).

The disordered stretch occupies residues 44-78 (MRQGTHKTKNRAEVSGGGRKPWRQKGTGRARQGSI).

This sequence belongs to the universal ribosomal protein uL4 family. As to quaternary structure, part of the 50S ribosomal subunit.

In terms of biological role, one of the primary rRNA binding proteins, this protein initially binds near the 5'-end of the 23S rRNA. It is important during the early stages of 50S assembly. It makes multiple contacts with different domains of the 23S rRNA in the assembled 50S subunit and ribosome. This protein when expressed in E.coli represses the endogenous S10 operon; this may not occur in B.stearothermophilus however. Its function is as follows. Forms part of the polypeptide exit tunnel. This is Large ribosomal subunit protein uL4 (rplD) from Geobacillus stearothermophilus (Bacillus stearothermophilus).